A 182-amino-acid polypeptide reads, in one-letter code: Alkyl hydroperoxide reductase AhpD (182 aa).

The active-site Proton donor is Cys-132. Cys-132 and Cys-135 are oxidised to a cystine. Cys-135 serves as the catalytic Cysteine sulfenic acid (-SOH) intermediate.

It belongs to the AhpD family.

It catalyses the reaction N(6)-[(R)-dihydrolipoyl]-L-lysyl-[lipoyl-carrier protein] + a hydroperoxide = N(6)-[(R)-lipoyl]-L-lysyl-[lipoyl-carrier protein] + an alcohol + H2O. In terms of biological role, antioxidant protein with alkyl hydroperoxidase activity. Required for the reduction of the AhpC active site cysteine residues and for the regeneration of the AhpC enzyme activity. The protein is Alkyl hydroperoxide reductase AhpD of Bradyrhizobium diazoefficiens (strain JCM 10833 / BCRC 13528 / IAM 13628 / NBRC 14792 / USDA 110).